The chain runs to 923 residues: Progesterone receptor (923 aa).

Positions 1 to 11 (MTELQAKDPRT) are enriched in basic and acidic residues. The tract at residues 1 to 49 (MTELQAKDPRTLHTSGAAPSPTHVGSPLLARLDPDPFQGSQHSDASSVV) is disordered. Positions 1 to 164 (MTELQAKDPR…PATKGLLSPL (164 aa)) are AF3; mediates transcriptional activation (in isoform B). Residues 1–556 (MTELQAKDPR…YGFDSLPQKI (556 aa)) are modulating, Pro-Rich. Residue lysine 7 forms a Glycyl lysine isopeptide (Lys-Gly) (interchain with G-Cter in SUMO) linkage. Position 20 is a phosphoserine (serine 20). A compositionally biased stretch (polar residues) spans 38-49 (QGSQHSDASSVV). Residues 56–60 (LDRLL) carry the LXXL motif 1 motif. A disordered region spans residues 67–111 (AQELPDEKTQNQQSLSDVEGAFSGVEASRRRSRNPRAPEKDSRLL). Position 82 is a phosphoserine (serine 82). The short motif at 115–119 (LDTLL) is the LXXL motif 2 element. Residues serine 130 and serine 162 each carry the phosphoserine modification. Residues 152–239 (RSVPATKGLL…EGSAGPLLKS (88 aa)) are disordered. The tract at residues 165 to 304 (MSRPESKAGD…LATTVVDFIH (140 aa)) is mediates transcriptional transrepression (in isoform A). Positions 184-188 (VLPKA) match the Nuclear localization signal motif. Serine 190 and serine 213 each carry phosphoserine. Serine 293 carries the phosphoserine; by MAPK1 modification. Residues 333–371 (AAQVPFAPPRGSPSAPSPPVPCGDFPDCTYPPEGDPKED) form a disordered region. Positions 338 to 353 (FAPPRGSPSAPSPPVP) are enriched in pro residues. Phosphoserine; by MAPK is present on serine 344. Lysine 387 is covalently cross-linked (Glycyl lysine isopeptide (Lys-Gly) (interchain with G-Cter in SUMO); alternate). Residue lysine 387 forms a Glycyl lysine isopeptide (Lys-Gly) (interchain with G-Cter in ubiquitin); alternate linkage. Position 399 is a phosphoserine; by CDK2 (serine 399). A disordered region spans residues 412 to 435 (TFPDFPLPPRPPRAPPSRPGEAAV). Over residues 416-429 (FPLPPRPPRAPPSR) the composition is skewed to pro residues. The segment at 450-536 (SALECILYKA…VYPPYLNYLR (87 aa)) is AF1; mediates transcriptional activation. Residue lysine 521 forms a Glycyl lysine isopeptide (Lys-Gly) (interchain with G-Cter in SUMO) linkage. 2 NR C4-type zinc fingers span residues 557–577 (CLIC…CGSC) and 593–617 (CAGR…LRKC). Positions 557-629 (CLICGDEASG…AGMVLGGRKF (73 aa)) form a DNA-binding region, nuclear receptor. At serine 666 the chain carries Phosphoserine. One can recognise an NR LBD domain in the interval 669 to 903 (QEIQLVPPLI…EFPEMMSEVI (235 aa)). Residues 677-923 (LINLLMSIEP…MVKPLLFHKK (247 aa)) are AF2; mediates transcriptional activation. Position 756 (arginine 756) interacts with progesterone.

This sequence belongs to the nuclear hormone receptor family. NR3 subfamily. Interacts with SMARD1 and UNC45A. Interacts with CUEDC2; the interaction promotes ubiquitination, decreases sumoylation, and represses transcriptional activity. Interacts with PIAS3; the interaction promotes sumoylation of PR in a hormone-dependent manner, inhibits DNA-binding, and alters nuclear export. Interacts with SP1; the interaction requires ligand-induced phosphorylation on Ser-344. Interacts with PRMT2. Isoform A interacts with NCOR2. Isoform B (but not isoform A) interacts with NCOA2 and NCOA1. Isoform B (but not isoform A) interacts with KLF9. Interacts with GTF2B. Post-translationally, phosphorylated on multiple serine sites. Several of these sites are hormone-dependent. Phosphorylation on Ser-293 is highly hormone-dependent and modulates ubiquitination and sumoylation on Lys-387. Phosphorylation on Ser-344 also requires induction by hormone. Basal phosphorylation on Ser-82, Ser-190 and Ser-399 is increased in response to progesterone and can be phosphorylated in vitro by the CDK2-A1 complex. Increased levels of phosphorylation on Ser-399 also in the presence of EGF, heregulin, IGF, PMA and FBS. Phosphorylation at this site by CDK2 is ligand-independent, and increases nuclear translocation and transcriptional activity. Phosphorylation at Ser-293, but not at Ser-190, is impaired during the G(2)/M phase of the cell cycle. Phosphorylation on Ser-344 by ERK1/2 MAPK is required for interaction with SP1. In terms of processing, sumoylation is hormone-dependent and represses transcriptional activity. Sumoylation on all three sites is enhanced by PIAS3. Desumoylated by SENP1. Sumoylation on Lys-387, the main site of sumoylation, is repressed by ubiquitination on the same site, and modulated by phosphorylation at Ser-293. Ubiquitination is hormone-dependent and represses sumoylation on the same site. Promoted by MAPK-mediated phosphorylation on Ser-293. Ubiquitinated by UBR5, leading to its degradation: UBR5 specifically recognizes and binds ligand-bound PGR when it is not associated with coactivators (NCOAs). In presence of NCOAs, the UBR5-degron is not accessible, preventing its ubiquitination and degradation. Post-translationally, palmitoylated by ZDHHC7 and ZDHHC21. Palmitoylation is required for plasma membrane targeting and for rapid intracellular signaling via ERK and AKT kinases and cAMP generation. As to expression, isoform A and isoform B are expressed in the pituitary.

Its subcellular location is the nucleus. The protein localises to the cytoplasm. Functionally, the steroid hormones and their receptors are involved in the regulation of eukaryotic gene expression and affect cellular proliferation and differentiation in target tissues. Depending on the isoform, progesterone receptor functions as a transcriptional activator or repressor. Ligand-dependent transdominant repressor of steroid hormone receptor transcriptional activity including repression of its isoform B, MR and ER. Transrepressional activity may involve recruitment of corepressor NCOR2. In terms of biological role, transcriptional activator of several progesteron-dependent promoters in a variety of cell types. Involved in activation of SRC-dependent MAPK signaling on hormone stimulation. The sequence is that of Progesterone receptor (Pgr) from Rattus norvegicus (Rat).